Consider the following 205-residue polypeptide: ATP phosphoribosyltransferase (205 aa).

This sequence belongs to the ATP phosphoribosyltransferase family. Short subfamily. As to quaternary structure, heteromultimer composed of HisG and HisZ subunits.

Its subcellular location is the cytoplasm. It carries out the reaction 1-(5-phospho-beta-D-ribosyl)-ATP + diphosphate = 5-phospho-alpha-D-ribose 1-diphosphate + ATP. It functions in the pathway amino-acid biosynthesis; L-histidine biosynthesis; L-histidine from 5-phospho-alpha-D-ribose 1-diphosphate: step 1/9. Functionally, catalyzes the condensation of ATP and 5-phosphoribose 1-diphosphate to form N'-(5'-phosphoribosyl)-ATP (PR-ATP). Has a crucial role in the pathway because the rate of histidine biosynthesis seems to be controlled primarily by regulation of HisG enzymatic activity. This is ATP phosphoribosyltransferase from Ruthia magnifica subsp. Calyptogena magnifica.